The following is a 263-amino-acid chain: Rano class II histocompatibility antigen, B-1 beta chain (263 aa).

A signal peptide spans 1–27 (MALQTPSFLLPAAVVVLMVLSSPGTEG). The segment at 28–120 (RDSPRDFVYQ…SEVRTSLRRL (93 aa)) is beta-1. Topologically, residues 28-224 (RDSPRDFVYQ…RAQSESAQSK (197 aa)) are extracellular. Disulfide bonds link Cys42/Cys104 and Cys143/Cys199. Residue Asn46 is glycosylated (N-linked (GlcNAc...) asparagine). Residues 121 to 214 (EQPNVAISLS…SLESPVTVEW (94 aa)) are beta-2. An Ig-like C1-type domain is found at 123–211 (PNVAISLSRT…DHPSLESPVT (89 aa)). Positions 215 to 224 (RAQSESAQSK) are connecting peptide. A helical membrane pass occupies residues 225–245 (MLSGIGGFVLGVIFLGLGLFI). Over 246–263 (RHKRQKGPRGPPPAGLLQ) the chain is Cytoplasmic. Lys251 participates in a covalent cross-link: Glycyl lysine isopeptide (Lys-Gly) (interchain with G-Cter in ubiquitin).

This sequence belongs to the MHC class II family.

It localises to the membrane. Involved in the presentation of foreign antigens to the immune system. The chain is Rano class II histocompatibility antigen, B-1 beta chain (RT1-Bb) from Rattus norvegicus (Rat).